The following is a 338-amino-acid chain: Glycerol-3-phosphate dehydrogenase [NAD(P)+] (338 aa).

4 residues coordinate NADPH: S14, Y15, H35, and K109. Sn-glycerol 3-phosphate-binding residues include K109, G138, and T140. A142 serves as a coordination point for NADPH. K194, D247, S257, R258, and N259 together coordinate sn-glycerol 3-phosphate. The active-site Proton acceptor is K194. R258 lines the NADPH pocket. Residues V282 and E284 each contribute to the NADPH site.

The protein belongs to the NAD-dependent glycerol-3-phosphate dehydrogenase family.

The protein resides in the cytoplasm. The enzyme catalyses sn-glycerol 3-phosphate + NAD(+) = dihydroxyacetone phosphate + NADH + H(+). It carries out the reaction sn-glycerol 3-phosphate + NADP(+) = dihydroxyacetone phosphate + NADPH + H(+). It functions in the pathway membrane lipid metabolism; glycerophospholipid metabolism. Its function is as follows. Catalyzes the reduction of the glycolytic intermediate dihydroxyacetone phosphate (DHAP) to sn-glycerol 3-phosphate (G3P), the key precursor for phospholipid synthesis. The protein is Glycerol-3-phosphate dehydrogenase [NAD(P)+] of Shewanella baltica (strain OS195).